Reading from the N-terminus, the 1835-residue chain is AT-rich interactive domain-containing protein 2 (1835 aa).

Ala2 carries the post-translational modification N-acetylalanine. Ser4 carries the phosphoserine modification. Glycyl lysine isopeptide (Lys-Gly) (interchain with G-Cter in SUMO2) cross-links involve residues Lys7, Lys15, and Lys119. In terms of domain architecture, ARID spans 13–105 (RRKGLAFLDE…YLEKYEKVHH (93 aa)). The short motif at 313 to 317 (LRFLL) is the LXXLL element. The RFX-type winged-helix DNA-binding region spans 524-603 (ACQWLNAHFE…IHVVGVKRRA (80 aa)). A Glycyl lysine isopeptide (Lys-Gly) (interchain with G-Cter in SUMO2) cross-link involves residue Lys555. Phosphoserine occurs at positions 631 and 635. A Phosphothreonine modification is found at Thr653. The residue at position 689 (Ser689) is a Phosphoserine. Thr692 bears the Phosphothreonine mark. Disordered regions lie at residues 819–844 (QQLI…QSQD), 962–1057 (LTGQ…SGES), 1266–1287 (MENP…KENE), 1295–1314 (NGRK…KIQS), and 1321–1341 (LISN…KQNS). 3 stretches are compositionally biased toward low complexity: residues 823 to 843 (TTSP…SQSQ), 985 to 996 (PTAMSSSSTPQS), and 1025 to 1044 (QVQV…QPQQ). Residue Ser1300 is modified to Phosphoserine. Residues 1301–1314 (DSSLPPSNSGKIQS) are compositionally biased toward polar residues. Phosphoserine occurs at positions 1391 and 1496. Disordered stretches follow at residues 1488 to 1522 (DSGS…AEDT) and 1572 to 1629 (SAVQ…RKPG). The span at 1491 to 1509 (SKVSHSPALSSDVRSTNGT) shows a compositional bias: polar residues. Basic and acidic residues predominate over residues 1513–1522 (KTVKRPAEDT). Residues 1573–1592 (AVQQKQQHPPTYVQNVVPQN) show a composition bias toward polar residues. Residues 1602 to 1623 (QVQGQPNSSQPSPFSGSSQPGD) show a composition bias toward low complexity. The segment at 1632-1657 (FMCLWQSCKKWFQTPSQVFYHAATEH) adopts a C2H2-type zinc-finger fold. Glycyl lysine isopeptide (Lys-Gly) (interchain with G-Cter in SUMO2) cross-links involve residues Lys1701, Lys1716, and Lys1731. The disordered stretch occupies residues 1703–1728 (DEPGQAGSQKSSTKQPTVGGTSSTPR). Over residues 1708–1728 (AGSQKSSTKQPTVGGTSSTPR) the composition is skewed to polar residues.

As to quaternary structure, component of the SWI/SNF-B (PBAF) chromatin remodeling complex, at least composed of SMARCA4/BRG1, SMARCB1/BAF47/SNF5, ACTL6A/BAF53A or ACTL6B/BAF53B, SMARCE1/BAF57, SMARCD1/BAF60A, SMARCD2/BAF60B, perhaps SMARCD3/BAF60C, SMARCC1/BAF155, SMARCC2/BAF170, PBRM1/BAF180, ARID2/BAF200 and actin. Interacts with SRF. Forms complexes with SRF and SRF cofactors MYOCD, NKX2-5 and SRFBP1. As to expression, highly expressed in heart.

It localises to the nucleus. Functionally, involved in transcriptional activation and repression of select genes by chromatin remodeling (alteration of DNA-nucleosome topology). Required for the stability of the SWI/SNF chromatin remodeling complex SWI/SNF-B (PBAF). May be involved in targeting the complex to different genes. May be involved in regulating transcriptional activation of cardiac genes. This chain is AT-rich interactive domain-containing protein 2, found in Homo sapiens (Human).